A 205-amino-acid chain; its full sequence is Guanylyl cyclase-activating protein 1 (205 aa).

G2 carries the N-myristoyl glycine lipid modification. At N3 the chain carries Deamidated asparagine. 4 consecutive EF-hand domains span residues 30 to 48 (SGQL…KNLS), 50 to 85 (ASNQ…VLKG), 86 to 121 (KVEQ…IRAI), and 129 to 164 (TAEE…DELL). D63, N65, D67, Y69, E74, D99, D101, N103, C105, E110, D142, N144, D146, E148, and E153 together coordinate Ca(2+).

Retina.

Regulatory protein that inhibits guanylyl cyclase when free calcium ions concentration is elevated. This Ca(2+)-sensitive regulation of retinal guanylyl cyclase is a key event in recovery of the dark state of rod photoreceptors following light exposure. The protein is Guanylyl cyclase-activating protein 1 (GUCA1A) of Lithobates pipiens (Northern leopard frog).